Reading from the N-terminus, the 480-residue chain is UDP-glucose 6-dehydrogenase 5 (480 aa).

Residues 8 to 13, aspartate 33, arginine 38, 86 to 90, 127 to 128, and glutamate 161 contribute to the NAD(+) site; these read GAGYVG, VNTPT, and ST. Substrate contacts are provided by residues 157–161, 216–223, and 256–269; these read EFLAE, KLAANAFL, and RIGP…VGFG. Cysteine 272 (nucleophile) is an active-site residue. 272–275 lines the NAD(+) pocket; it reads CFQK. Residue 334–335 coordinates substrate; the sequence is FK. Arginine 342 contacts NAD(+). Serine 393 bears the Phosphoserine mark. Arginine 447 serves as a coordination point for substrate.

The protein belongs to the UDP-glucose/GDP-mannose dehydrogenase family.

It carries out the reaction UDP-alpha-D-glucose + 2 NAD(+) + H2O = UDP-alpha-D-glucuronate + 2 NADH + 3 H(+). It participates in nucleotide-sugar biosynthesis; UDP-alpha-D-glucuronate biosynthesis; UDP-alpha-D-glucuronate from UDP-alpha-D-glucose: step 1/1. In terms of biological role, involved in the biosynthesis of UDP-glucuronic acid (UDP-GlcA), providing nucleotide sugars for cell-wall polymers. In Oryza sativa subsp. japonica (Rice), this protein is UDP-glucose 6-dehydrogenase 5 (UGD5).